We begin with the raw amino-acid sequence, 362 residues long: Probable secreted beta-glucosidase UTH1 (362 aa).

Residues 1–17 form the signal peptide; that stretch reads MKLSALLALSASTAVLA.

It belongs to the SUN family.

The protein localises to the mitochondrion outer membrane. The protein resides in the secreted. Its subcellular location is the cell wall. In terms of biological role, involved in aging, oxidative stress response, and in the regulation of mitochondrial biogenesis. Inactivation of UTH1 increases life span, leads to higher resistance to heat stress and to hydrogen peroxide, and increases sensitivity to the superoxide radical-generating drug paraquat and to copper. Also required for the selective autophagic degradation of mitochondria (mitophagy) in response to nitrogen starvation. May play a role in cell wall morphogenesis and septation. Involved in the remodeling of the cell wall during the various phases of yeast culture development and under various environmental conditions and plays a role in septation. Involved in cell sensitivity to boric acid. The sequence is that of Probable secreted beta-glucosidase UTH1 (UTH1) from Saccharomyces cerevisiae (strain YJM789) (Baker's yeast).